The chain runs to 60 residues: DSECLKEYGGDVGFGFCAPRIYPSFCVQRCRADKGALSGKCIWGQGSNVKCLCNFCRHEP.

Intrachain disulfides connect Cys-4/Cys-56, Cys-17/Cys-41, Cys-26/Cys-51, and Cys-30/Cys-53.

It belongs to the DEFL family. Protease inhibitor I18 (RTI/MTI-2) subfamily.

It is found in the secreted. Functionally, inhibits trypsin and chymotrypsin. This chain is Defensin-like protein 4, found in Brassica napus (Rape).